Here is a 298-residue protein sequence, read N- to C-terminus: Ribosomal RNA processing protein 36 homolog (298 aa).

Residues Met1–Met131 form a disordered region. Residues Ser14–Glu56 are compositionally biased toward acidic residues. Polar residues-rich tracts occupy residues Gln61–Ser70 and Leu83–Leu92. Coiled-coil stretches lie at residues Ile88 to Lys112 and Arg196 to Leu228. The segment covering Phe98–Ser111 has biased composition (basic and acidic residues). The tract at residues Ile279 to Asn298 is disordered.

Belongs to the RRP36 family.

It is found in the nucleus. The protein localises to the nucleolus. Its function is as follows. Involved in the early processing steps of the pre-rRNA in the maturation pathway leading to the 18S rRNA. The protein is Ribosomal RNA processing protein 36 homolog of Dictyostelium discoideum (Social amoeba).